The sequence spans 691 residues: Menaquinone reductase, molybdopterin-binding-like subunit (691 aa).

The segment at residues 1-27 is a signal peptide (tat-type signal); that stretch reads MALDRRGFLKFIGGATAGILATPVVWK. The region spanning 50 to 106 is the 4Fe-4S Mo/W bis-MGD-type domain; the sequence is NSYVPTVSKLCPTGIGVRVRLVDGRPVRVIGNPEHPLSKGGVSSIAAAEVQMLYSPA.

Belongs to the prokaryotic molybdopterin-containing oxidoreductase family. As to quaternary structure, the Qrc complex is composed of four subunits: QrcA, QrcB, QrcC and QrcD. Can form a supercomplex with the [NiFe] hydrogenase HynA1 and the tetraheme Type I cytochrome c3 TpIc(3), its physiological electron donors. There is no molybdenum or tungsten pterin cofactor present in the Qrc complex, despite the similarity of QrcB to molybdopterin-containing oxidoreductases. serves as cofactor. Predicted to be exported by the Tat system. The position of the signal peptide cleavage has not been experimentally proven.

The protein localises to the periplasm. In terms of biological role, component of the respiratory Qrc complex, that catalyzes the reduction of the menaquinone pool using electrons transferred from the reduced periplasmic cytochrome c3, and which is probably involved in sulfate respiration. Is likely essential for growth on H(2) or formate since the periplasmic hydrogenases and/or formate dehydrogenases act as primary electron donors for the Qrc complex. The function of the QrcB subunit is unknown; in the absence of a catalytic site, it may provide a structural scaffold for the other subunits. The sequence is that of Menaquinone reductase, molybdopterin-binding-like subunit from Nitratidesulfovibrio vulgaris (strain ATCC 29579 / DSM 644 / CCUG 34227 / NCIMB 8303 / VKM B-1760 / Hildenborough) (Desulfovibrio vulgaris).